The chain runs to 365 residues: Outer membrane lipoprotein A (365 aa).

Residues 1–19 (MNIATKLMASLVASVVLTA) form the signal peptide. Residues 19-121 (ACSGGGSSGS…KGEELSKDKS (103 aa)) form a disordered region. The N-palmitoyl cysteine moiety is linked to residue Cys-20. Cys-20 carries the S-diacylglycerol cysteine lipid modification. Basic and acidic residues-rich tracts occupy residues 48–68 (EQPK…EPKE) and 105–121 (NPQK…KDKS).

Its subcellular location is the cell outer membrane. In Actinobacillus pleuropneumoniae (Haemophilus pleuropneumoniae), this protein is Outer membrane lipoprotein A (omlA).